The sequence spans 356 residues: WAT1-related protein At1g68170 (356 aa).

10 helical membrane-spanning segments follow: residues 4 to 24 (ITAM…FKLA), 33 to 53 (VLVA…CFIF), 65 to 85 (LMLL…ILTI), 94 to 114 (TFTS…AALL), 125 to 145 (VGLA…VFIF), 176 to 196 (ISIL…LWFL), 210 to 230 (WNAT…ALCW), 245 to 265 (LLTI…VNAW), 273 to 293 (LFVS…GSFL), and 298 to 318 (LHLG…IVLW). EamA domains lie at 14 to 142 (TAGL…GALV) and 191 to 317 (ISLW…YIVL).

The protein belongs to the drug/metabolite transporter (DMT) superfamily. Plant drug/metabolite exporter (P-DME) (TC 2.A.7.4) family.

The protein resides in the membrane. In Arabidopsis thaliana (Mouse-ear cress), this protein is WAT1-related protein At1g68170.